We begin with the raw amino-acid sequence, 161 residues long: Phosphopantetheine adenylyltransferase (161 aa).

Position 9 (S9) interacts with substrate. ATP-binding positions include 9-10 (SF) and H17. Substrate-binding residues include K41, V73, and K87. Residues 88–90 (GLR), E98, and 122–128 (YSFVSSS) contribute to the ATP site.

Belongs to the bacterial CoaD family. Homohexamer. Mg(2+) is required as a cofactor.

Its subcellular location is the cytoplasm. It carries out the reaction (R)-4'-phosphopantetheine + ATP + H(+) = 3'-dephospho-CoA + diphosphate. It participates in cofactor biosynthesis; coenzyme A biosynthesis; CoA from (R)-pantothenate: step 4/5. Its function is as follows. Reversibly transfers an adenylyl group from ATP to 4'-phosphopantetheine, yielding dephospho-CoA (dPCoA) and pyrophosphate. The polypeptide is Phosphopantetheine adenylyltransferase (Mycobacterium bovis (strain ATCC BAA-935 / AF2122/97)).